A 675-amino-acid polypeptide reads, in one-letter code: Putative acyl-coenzyme A oxidase 3.2, peroxisomal (675 aa).

A peroxisome-targeting transit peptide spans 1-34 (MSENVELRRAHILANHILRSPRPSSNPSLTPEVC). 442–457 (AVGGQGLKTENRVGHL) contacts FAD.

It belongs to the acyl-CoA oxidase family. It depends on FAD as a cofactor.

It localises to the peroxisome. It catalyses the reaction a 2,3-saturated acyl-CoA + O2 = a (2E)-enoyl-CoA + H2O2. Functionally, catalyzes the desaturation of acyl-CoAs to 2-trans-enoyl-CoAs. This is Putative acyl-coenzyme A oxidase 3.2, peroxisomal (ACX3.2) from Arabidopsis thaliana (Mouse-ear cress).